The primary structure comprises 83 residues: Parvalbumin beta 3 (83 aa).

2 consecutive EF-hand domains span residues 13–48 and 52–83; these read KSND…FSAG and LTAG…LVKA. Residues D26, D28, S30, F32, E34, E37, D65, D67, D69, M71, and E76 each coordinate Ca(2+).

It belongs to the parvalbumin family.

Its function is as follows. In muscle, parvalbumin is thought to be involved in relaxation after contraction. It binds two calcium ions. This chain is Parvalbumin beta 3, found in Macruronus novaezelandiae (Blue grenadier).